The sequence spans 626 residues: UvrABC system protein C (626 aa).

Positions 26–105 (PEPGVYFMRD…IKQHQPHFNV (80 aa)) constitute a GIY-YIG domain. Residues 215–250 (SELINTLSLQMEQAAEDLNFEQAARLRDQIKGLQGL) enclose the UVR domain.

This sequence belongs to the UvrC family. Interacts with UvrB in an incision complex.

The protein resides in the cytoplasm. In terms of biological role, the UvrABC repair system catalyzes the recognition and processing of DNA lesions. UvrC both incises the 5' and 3' sides of the lesion. The N-terminal half is responsible for the 3' incision and the C-terminal half is responsible for the 5' incision. The polypeptide is UvrABC system protein C (Acaryochloris marina (strain MBIC 11017)).